Reading from the N-terminus, the 361-residue chain is Histidinol-phosphate aminotransferase (361 aa).

An N6-(pyridoxal phosphate)lysine modification is found at Lys221.

Belongs to the class-II pyridoxal-phosphate-dependent aminotransferase family. Histidinol-phosphate aminotransferase subfamily. As to quaternary structure, homodimer. Pyridoxal 5'-phosphate serves as cofactor.

It catalyses the reaction L-histidinol phosphate + 2-oxoglutarate = 3-(imidazol-4-yl)-2-oxopropyl phosphate + L-glutamate. It functions in the pathway amino-acid biosynthesis; L-histidine biosynthesis; L-histidine from 5-phospho-alpha-D-ribose 1-diphosphate: step 7/9. The polypeptide is Histidinol-phosphate aminotransferase (Symbiobacterium thermophilum (strain DSM 24528 / JCM 14929 / IAM 14863 / T)).